A 398-amino-acid polypeptide reads, in one-letter code: Histone-lysine N-methyltransferase ASHR2 (398 aa).

The SET domain occupies 11–270; that stretch reads TLLRVAEIGG…EGREVCLSYF (260 aa).

The protein belongs to the class V-like SAM-binding methyltransferase superfamily. Histone-lysine methyltransferase family. SET2 subfamily.

Its subcellular location is the nucleus. The protein resides in the chromosome. It catalyses the reaction L-lysyl-[histone] + S-adenosyl-L-methionine = N(6)-methyl-L-lysyl-[histone] + S-adenosyl-L-homocysteine + H(+). Functionally, histone methyltransferase. This chain is Histone-lysine N-methyltransferase ASHR2 (ASHR2), found in Arabidopsis thaliana (Mouse-ear cress).